The sequence spans 123 residues: Small ribosomal subunit protein uS12c (123 aa).

Belongs to the universal ribosomal protein uS12 family. Part of the 30S ribosomal subunit.

The protein localises to the plastid. Its subcellular location is the chloroplast. Its function is as follows. With S4 and S5 plays an important role in translational accuracy. Located at the interface of the 30S and 50S subunits. This is Small ribosomal subunit protein uS12c (rps12) from Chlorokybus atmophyticus (Soil alga).